The chain runs to 383 residues: Cytochrome b (383 aa).

A run of 4 helical transmembrane segments spans residues 30–50, 74–96, 109–129, and 175–195; these read FGSL…LLAM, WILR…CHIG, TWIV…IGYV, and FFSL…AHLL. Positions 80 and 94 each coordinate heme b. Residues His179 and His193 each contribute to the heme b site. His198 is an a ubiquinone binding site. The next 4 helical transmembrane spans lie at 221–241, 289–309, 320–340, and 345–365; these read FTIK…IIGI, GVLA…LDRS, AKFF…IGSA, and EPYV…FLVL.

The protein belongs to the cytochrome b family. In terms of assembly, the main subunits of complex b-c1 are: cytochrome b, cytochrome c1 and the Rieske protein. Heme b is required as a cofactor.

Its subcellular location is the mitochondrion inner membrane. Functionally, component of the ubiquinol-cytochrome c reductase complex (complex III or cytochrome b-c1 complex) that is part of the mitochondrial respiratory chain. The b-c1 complex mediates electron transfer from ubiquinol to cytochrome c. Contributes to the generation of a proton gradient across the mitochondrial membrane that is then used for ATP synthesis. The sequence is that of Cytochrome b (mt:Cyt-b) from Trichoplax adhaerens (Trichoplax reptans).